The chain runs to 341 residues: MIKNDLLLKALKGESVERPPVWMMRQAGRYLPDFMKLKEKYDFFTRCRTPELATEITVMPIRQIGPDAAILFSDILVVPQAMNIEVEMKPGVGPWLPNPIDSPKKVEQVIVPDVNEELGYVFEAIKMTKQELNDEVPLIGFAGSPWTILCYCVQGQGSKTFDKAKRFCFMNPIAAHTLLQKITDTTIAYLKEKVKAGVDAVQLFDSWGGLLEPKDYQEFSWKYMQQIIEALKDEVPVIAYGKGCWFALDKMAKSGAAALGVDWTCEARNARYLSGGEITLQGNFDPARLYSKPIEIKYMVNDMIKAFGKDRYIANLGHGILPNIPVDNAKAFVDAVKEYKE.

Substrate-binding positions include 25-29 (RQAGR), phenylalanine 44, aspartate 74, tyrosine 151, serine 206, and histidine 318.

It belongs to the uroporphyrinogen decarboxylase family. In terms of assembly, homodimer.

It localises to the cytoplasm. It catalyses the reaction uroporphyrinogen III + 4 H(+) = coproporphyrinogen III + 4 CO2. The protein operates within porphyrin-containing compound metabolism; protoporphyrin-IX biosynthesis; coproporphyrinogen-III from 5-aminolevulinate: step 4/4. Functionally, catalyzes the decarboxylation of four acetate groups of uroporphyrinogen-III to yield coproporphyrinogen-III. The polypeptide is Uroporphyrinogen decarboxylase (Christiangramia forsetii (strain DSM 17595 / CGMCC 1.15422 / KT0803) (Gramella forsetii)).